Reading from the N-terminus, the 252-residue chain is dITP/XTP pyrophosphatase (252 aa).

7-12 (THNEGK) provides a ligand contact to substrate. Asp74 acts as the Proton acceptor in catalysis. Asp74 serves as a coordination point for Mg(2+). Substrate-binding positions include Ser75 and 193–196 (FGYD). The disordered stretch occupies residues 202 to 229 (DDQPAGRVSTEPDHEGEPLTSAEMTPAE). Substrate-binding positions include Lys230 and 235 to 236 (HR).

The protein belongs to the HAM1 NTPase family. In terms of assembly, homodimer. It depends on Mg(2+) as a cofactor.

The catalysed reaction is XTP + H2O = XMP + diphosphate + H(+). It carries out the reaction dITP + H2O = dIMP + diphosphate + H(+). The enzyme catalyses ITP + H2O = IMP + diphosphate + H(+). Functionally, pyrophosphatase that catalyzes the hydrolysis of nucleoside triphosphates to their monophosphate derivatives, with a high preference for the non-canonical purine nucleotides XTP (xanthosine triphosphate), dITP (deoxyinosine triphosphate) and ITP. Seems to function as a house-cleaning enzyme that removes non-canonical purine nucleotides from the nucleotide pool, thus preventing their incorporation into DNA/RNA and avoiding chromosomal lesions. The protein is dITP/XTP pyrophosphatase of Bifidobacterium longum (strain NCC 2705).